The following is a 309-amino-acid chain: Putative F-box protein At4g05475 (309 aa).

Residues M1 to S26 are disordered. In terms of domain architecture, F-box spans R37 to I84.

The protein is Putative F-box protein At4g05475 of Arabidopsis thaliana (Mouse-ear cress).